Reading from the N-terminus, the 773-residue chain is Probable serine/threonine-protein kinase MARK-C (773 aa).

Over residues 1–27 (MESNKSSSHGDVSTSPSFLNNHHQFNN) the composition is skewed to polar residues. The tract at residues 1 to 32 (MESNKSSSHGDVSTSPSFLNNHHQFNNGGDII) is disordered. In terms of domain architecture, Protein kinase spans 46-300 (YEVGKTLGNG…IQELKNHPWT (255 aa)). ATP-binding positions include 52 to 60 (LGNGTFGKV) and lysine 75. Catalysis depends on aspartate 171, which acts as the Proton acceptor. Positions 362-390 (RYASKEVENLKSKLELLSKRKKSFSDKRN) form a coiled coil. Disordered regions lie at residues 382 to 445 (KKSF…SQGS), 462 to 487 (DNDIENSDNNKSSSLTRRSSDPNKDI), and 558 to 588 (YSIQQQQLQQQQQQQQEQHKEDNNKPNTNLR). The span at 405–443 (DLSSNNNNNQQQQNSPPSKTNSSSTSSSNRESNNNSPSQ) shows a compositional bias: low complexity. Residues 445-474 (SIKEISLDELDNHIEQLDNDIENSDNNKSS) are a coiled coil. Residues 468–478 (SDNNKSSSLTR) show a composition bias toward polar residues. The span at 561 to 573 (QQQQLQQQQQQQQ) shows a compositional bias: low complexity. The KA1 domain maps to 724-773 (CFDEDNSVKFQIEIVKICNLDLTGIQLKRLSGDTWKYKDICTELVESMKL).

It belongs to the protein kinase superfamily. CAMK Ser/Thr protein kinase family. SNF1 subfamily.

It carries out the reaction L-seryl-[protein] + ATP = O-phospho-L-seryl-[protein] + ADP + H(+). It catalyses the reaction L-threonyl-[protein] + ATP = O-phospho-L-threonyl-[protein] + ADP + H(+). This chain is Probable serine/threonine-protein kinase MARK-C (mrkC), found in Dictyostelium discoideum (Social amoeba).